The chain runs to 747 residues: Protein MTSS 2 (747 aa).

The region spanning 1 to 252 is the IMD domain; that stretch reads METAEKECGA…EQVIKDLKGS (252 aa). The stretch at 135 to 159 forms a coiled coil; that stretch reads EIKKKSSDTLKLQKKARKELLGKGD. Composition is skewed to low complexity over residues 256 to 284, 321 to 332, and 349 to 367; these read WSYQ…SSSS, SSVSSHDSGFVS, and TSQK…TCQS. 4 disordered regions span residues 256 to 302, 318 to 441, 457 to 522, and 543 to 599; these read WSYQ…YSPS, ARLS…EEVS, LEHQ…RNSN, and PTAG…PTVP. Thr260 carries the phosphothreonine modification. The residue at position 264 (Ser264) is a Phosphoserine. Residues 368-378 are compositionally biased toward polar residues; that stretch reads VSECSSPTSDW. Basic and acidic residues predominate over residues 397-406; sequence DRVELLRDTE. A Phosphoserine modification is found at Ser441. The segment covering 466–479 has biased composition (low complexity); the sequence is SLQYSSGYSTQTTT. Over residues 480–492 the composition is skewed to polar residues; sequence PSCSEDTIPSQGS. 6 positions are modified to phosphoserine: Ser579, Ser601, Ser612, Ser624, Ser634, and Ser639. 2 disordered regions span residues 638-664 and 691-720; these read LSLP…EDEQ and GQFP…DPPA. Thr643 is subject to Phosphothreonine. Composition is skewed to low complexity over residues 646 to 659 and 696 to 707; these read GSPS…PGAG and PTALSATPTEET. The WH2 domain occupies 719-736; the sequence is PAEDMLVAIRRGVRLRRT.

This sequence belongs to the MTSS family. In terms of assembly, interacts (via IMD domain) with RAC1; this interaction may be important to potentiate PDGF-induced RAC1 activation.

It is found in the cytoplasm. The protein localises to the cell projection. Its subcellular location is the ruffle. Functionally, involved in plasma membrane dynamics. Potentiated PDGF-mediated formation of membrane ruffles and lamellipodia in fibroblasts, acting via RAC1 activation. May function in actin bundling. In Homo sapiens (Human), this protein is Protein MTSS 2.